The following is a 469-amino-acid chain: DNA-binding transcriptional regulator NtrC (469 aa).

The Response regulatory domain occupies 5–119 (IVWVVDDDSS…EAVALVERAI (115 aa)). Asp-54 is modified (4-aspartylphosphate). A Sigma-54 factor interaction domain is found at 140 to 369 (MIGEAPAMQD…LENTCRWLTV (230 aa)). Residues 168–175 (GESGTGKE) and 231–240 (ADGGTLFLDE) contribute to the ATP site. The segment at residues 445–464 (KQEAARLLGWGRNTLTRKLK) is a DNA-binding region (H-T-H motif).

In terms of processing, phosphorylated and dephosphorylated by NtrB.

The protein localises to the cytoplasm. Its function is as follows. Member of the two-component regulatory system NtrB/NtrC, which controls expression of the nitrogen-regulated (ntr) genes in response to nitrogen limitation. Phosphorylated NtrC binds directly to DNA and stimulates the formation of open promoter-sigma54-RNA polymerase complexes. The polypeptide is DNA-binding transcriptional regulator NtrC (glnG) (Salmonella typhimurium (strain LT2 / SGSC1412 / ATCC 700720)).